An 898-amino-acid chain; its full sequence is DNA topoisomerase 1 (898 aa).

In terms of domain architecture, Toprim spans 2 to 126 (SKLVIVESPT…IKRMVFHEIT (125 aa)). Residues glutamate 8 and aspartate 95 each coordinate Mg(2+). Residues 141–583 (DENLVHAQET…GFFLGESGLE (443 aa)) enclose the Topo IA-type catalytic domain. Positions 175 to 180 (SAGRVQ) are interaction with DNA. Tyrosine 320 acts as the O-(5'-phospho-DNA)-tyrosine intermediate in catalysis. A disordered region spans residues 840–898 (AEKAGSGKKTSRKKATTTAKGTKKTTSKKASATGTAKKTTTKRTTRKKAASPDQSSEAG). Basic residues predominate over residues 848–866 (KTSRKKATTTAKGTKKTTS). Over residues 867 to 877 (KKASATGTAKK) the composition is skewed to low complexity. The segment covering 878 to 888 (TTTKRTTRKKA) has biased composition (basic residues).

It belongs to the type IA topoisomerase family. Monomer. Requires Mg(2+) as cofactor.

It catalyses the reaction ATP-independent breakage of single-stranded DNA, followed by passage and rejoining.. In terms of biological role, releases the supercoiling and torsional tension of DNA, which is introduced during the DNA replication and transcription, by transiently cleaving and rejoining one strand of the DNA duplex. Introduces a single-strand break via transesterification at a target site in duplex DNA. The scissile phosphodiester is attacked by the catalytic tyrosine of the enzyme, resulting in the formation of a DNA-(5'-phosphotyrosyl)-enzyme intermediate and the expulsion of a 3'-OH DNA strand. The free DNA strand then undergoes passage around the unbroken strand, thus removing DNA supercoils. Finally, in the religation step, the DNA 3'-OH attacks the covalent intermediate to expel the active-site tyrosine and restore the DNA phosphodiester backbone. The chain is DNA topoisomerase 1 from Synechocystis sp. (strain ATCC 27184 / PCC 6803 / Kazusa).